A 483-amino-acid chain; its full sequence is Serralysin (483 aa).

A Zn(2+)-binding site is contributed by His184. Glu185 is a catalytic residue. Residues His188 and His194 each coordinate Zn(2+). Ca(2+) contacts are provided by Arg263, Asp266, Asp295, Gly297, Gly298, Asp300, Thr337, and Glu339. Hemolysin-type calcium-binding repeat units follow at residues 342 to 359 and 360 to 377; these read IGGS…ENIL and KGGA…ADQL.

The protein belongs to the peptidase M10B family. Zn(2+) serves as cofactor. It depends on Ca(2+) as a cofactor.

Its subcellular location is the secreted. The catalysed reaction is Preferential cleavage of bonds with hydrophobic residues in P1'.. Inhibited by 8 mM 1,10-phenanthroline and 10 mM EDTA, but not by PMSF. Its function is as follows. Involved in the inhibition of insect antibacterial peptides. Reduces the antibacterial activity of G.mellonella hemolymph by 50%. Reduces the antibacterial activity of cecropin A by 80% and cecropin B by 75%. The sequence is that of Serralysin from Photorhabdus sp. (strain Az29).